Here is a 67-residue protein sequence, read N- to C-terminus: Major cold shock protein (67 aa).

Residues Gly-4–Ile-63 enclose the CSD domain.

As to quaternary structure, homodimer.

It localises to the cytoplasm. The chain is Major cold shock protein (cspA) from Streptococcus pyogenes serotype M6 (strain ATCC BAA-946 / MGAS10394).